The sequence spans 468 residues: Glutamate--tRNA ligase (468 aa).

Residues 14-24 carry the 'HIGH' region motif; sequence PSPTGFIHLGN. The 'KMSKS' region signature appears at 246-250; the sequence is KMSKR. Lysine 249 serves as a coordination point for ATP.

This sequence belongs to the class-I aminoacyl-tRNA synthetase family. Glutamate--tRNA ligase type 1 subfamily. As to quaternary structure, monomer.

The protein resides in the cytoplasm. It catalyses the reaction tRNA(Glu) + L-glutamate + ATP = L-glutamyl-tRNA(Glu) + AMP + diphosphate. Catalyzes the attachment of glutamate to tRNA(Glu) in a two-step reaction: glutamate is first activated by ATP to form Glu-AMP and then transferred to the acceptor end of tRNA(Glu). The polypeptide is Glutamate--tRNA ligase (Leptothrix cholodnii (strain ATCC 51168 / LMG 8142 / SP-6) (Leptothrix discophora (strain SP-6))).